The chain runs to 635 residues: Probable extracellular metalloproteinase 1 (635 aa).

A signal peptide spans 1-19 (MHGLLLAAGLLSLPLHVLA). A propeptide spanning residues 20 to 246 (HPQPSTSTSL…VHNVVDYVAH (227 aa)) is cleaved from the precursor. Asparagine 287 carries N-linked (GlcNAc...) asparagine glycosylation. Histidine 430 serves as a coordination point for Zn(2+). Residue glutamate 431 is part of the active site. Residue histidine 434 coordinates Zn(2+). N-linked (GlcNAc...) asparagine glycans are attached at residues asparagine 475, asparagine 594, and asparagine 623.

Belongs to the peptidase M36 family. Requires Zn(2+) as cofactor.

It is found in the secreted. Its function is as follows. Secreted metalloproteinase probably acting as a virulence factor. The chain is Probable extracellular metalloproteinase 1 (MEP1) from Arthroderma benhamiae (strain ATCC MYA-4681 / CBS 112371) (Trichophyton mentagrophytes).